A 119-amino-acid chain; its full sequence is Secreted RxLR effector protein RXLR-C04 (119 aa).

The first 22 residues, 1–22 (MRLSYIFVVVATIITNCDIASA), serve as a signal peptide directing secretion. The RxLR-dEER motif lies at 40–77 (RILRQTNDSDDLEPIRHAMLDMELLEKIAKDPKYAEEV). Asn-46 is a glycosylation site (N-linked (GlcNAc...) asparagine).

It belongs to the RxLR effector family.

It is found in the secreted. The protein resides in the host cytoplasm. It localises to the host nucleus. Functionally, secreted effector that suppresses pattern-triggered immunity (PTI) in plant host. The sequence is that of Secreted RxLR effector protein RXLR-C04 from Plasmopara halstedii (Downy mildew of sunflower).